The primary structure comprises 738 residues: Envelope glycoprotein gp160 (738 aa).

The signal sequence occupies residues 1 to 21 (MCGKSLLCVASLLASAYLVYC). At 22–670 (TQYVTVFYGV…LTSWIKYIQY (649 aa)) the chain is on the extracellular side. An N-linked (GlcNAc...) asparagine; by host glycan is attached at Asn36. An intrachain disulfide couples Cys43 to Cys56. 23 N-linked (GlcNAc...) asparagine; by host glycosylation sites follow: Asn69, Asn113, Asn117, Asn118, Asn132, Asn141, Asn169, Asn182, Asn197, Asn229, Asn232, Asn263, Asn269, Asn280, Asn291, Asn301, Asn356, Asn362, Asn389, Asn402, Asn439, Asn454, and Asn457. 5 disulfides stabilise this stretch: Cys100/Cys205, Cys107/Cys196, Cys112/Cys153, Cys218/Cys248, and Cys228/Cys240. A V1 region spans residues 112–152 (CNSTTNNTTTTGSTTGMSEINETSPSYSDNCTGLGKEEIVN). The interval 153-196 (CQFYMTGLERDKKKQYNETWYSKDVVCESNNTKDGKNRCYMNHC) is V2. Residues 296–328 (CKRPGNKTVVPITLMSGLVFHSQPINTRPRQAW) are V3. A disulfide bridge links Cys296 with Cys329. Intrachain disulfides connect Cys381/Cys438 and Cys388/Cys411. The V4 stretch occupies residues 388-411 (CNMTWFLNWVENRPNQTQHNYAPC). Positions 454–460 (NQTNITF) are V5. A fusion peptide region spans residues 503–523 (GVFVLGFLGFLATAGSAMGAA). The immunosuppression stretch occupies residues 566-582 (LQARVTAIEKYLKDQAQ). Asn602, Asn611, and Asn627 each carry an N-linked (GlcNAc...) asparagine; by host glycan. Residues 615–636 (QEWEKQVRYLEANISQSLEQAQ) adopt a coiled-coil conformation. Residues 648-669 (KLNSWDVFGNWFDLTSWIKYIQ) form an MPER; binding to GalCer region. The helical transmembrane segment at 671-691 (GVYIVVGVIVLRIAIYIVQLL) threads the bilayer. Residues 692 to 738 (SRLRKGYRPVFSSPPGYLQQIHIHTDRGQPANEGTEEDDRDDDGYDL) are Cytoplasmic-facing. The YXXV motif; contains endocytosis signal motif lies at 698 to 701 (YRPV). Residues 716-738 (TDRGQPANEGTEEDDRDDDGYDL) are disordered. Over residues 725–738 (GTEEDDRDDDGYDL) the composition is skewed to acidic residues.

As to quaternary structure, the mature envelope protein (Env) consists of a homotrimer of non-covalently associated gp120-gp41 heterodimers. The resulting complex protrudes from the virus surface as a spike. There seems to be as few as 10 spikes on the average virion. Interacts with human CD4, CCR5 and CXCR4, to form a P4HB/PDI-CD4-CXCR4-gp120 complex. Gp120 also interacts with the C-type lectins CD209/DC-SIGN and CLEC4M/DC-SIGNR (collectively referred to as DC-SIGN(R)). Gp120 and gp41 interact with GalCer. In terms of assembly, the mature envelope protein (Env) consists of a homotrimer of non-covalently associated gp120-gp41 heterodimers. The resulting complex protrudes from the virus surface as a spike. There seems to be as few as 10 spikes on the average virion. Specific enzymatic cleavages in vivo yield mature proteins. Envelope glycoproteins are synthesized as an inactive precursor that is heavily N-glycosylated and processed likely by host cell furin in the Golgi to yield the mature SU and TM proteins. The cleavage site between SU and TM requires the minimal sequence [KR]-X-[KR]-R. In terms of processing, palmitoylation of the transmembrane protein and of Env polyprotein (prior to its proteolytic cleavage) is essential for their association with host cell membrane lipid rafts. Palmitoylation is therefore required for envelope trafficking to classical lipid rafts, but not for viral replication.

It is found in the virion membrane. Its subcellular location is the host cell membrane. The protein localises to the host endosome membrane. Its function is as follows. The surface protein gp120 (SU) attaches the virus to the host lymphoid cell by binding to the primary receptor CD4. This interaction induces a structural rearrangement creating a high affinity binding site for a chemokine coreceptor like CXCR4 and/or CCR5. This peculiar 2 stage receptor-interaction strategy allows gp120 to maintain the highly conserved coreceptor-binding site in a cryptic conformation, protected from neutralizing antibodies. Since CD4 also displays a binding site for the disulfide-isomerase P4HB/PDI, a P4HB/PDI-CD4-CXCR4-gp120 complex may form. In that complex, P4HB/PDI could reach and reduce gp120 disulfide bonds, causing major conformational changes in gp120. TXN, another PDI family member could also be involved in disulfide rearrangements in Env during fusion. These changes are transmitted to the transmembrane protein gp41 and are thought to activate its fusogenic potential by unmasking its fusion peptide. The surface protein gp120 is a ligand for CD209/DC-SIGN and CLEC4M/DC-SIGNR, which are respectively found on dendritic cells (DCs), and on endothelial cells of liver sinusoids and lymph node sinuses. These interactions allow capture of viral particles at mucosal surfaces by these cells and subsequent transmission to permissive cells. DCs are professional antigen presenting cells, critical for host immunity by inducing specific immune responses against a broad variety of pathogens. They act as sentinels in various tissues where they take up antigen, process it, and present it to T-cells following migration to lymphoid organs. HIV subverts the migration properties of dendritic cells to gain access to CD4+ T-cells in lymph nodes. Virus transmission to permissive T-cells occurs either in trans (without DCs infection, through viral capture and transmission), or in cis (following DCs productive infection, through the usual CD4-gp120 interaction), thereby inducing a robust infection. In trans infection, bound virions remain infectious over days and it is proposed that they are not degraded, but protected in non-lysosomal acidic organelles within the DCs close to the cell membrane thus contributing to the viral infectious potential during DCs' migration from the periphery to the lymphoid tissues. On arrival at lymphoid tissues, intact virions recycle back to DCs' cell surface allowing virus transmission to CD4+ T-cells. Virion capture also seems to lead to MHC-II-restricted viral antigen presentation, and probably to the activation of HIV-specific CD4+ cells. Functionally, the transmembrane protein gp41 (TM) acts as a class I viral fusion protein. Under the current model, the protein has at least 3 conformational states: pre-fusion native state, pre-hairpin intermediate state, and post-fusion hairpin state. During fusion of viral and target intracellular membranes, the coiled coil regions (heptad repeats) assume a trimer-of-hairpins structure, positioning the fusion peptide in close proximity to the C-terminal region of the ectodomain. The formation of this structure appears to drive apposition and subsequent fusion of viral and target cell membranes. Complete fusion occurs in host cell endosomes and is dynamin-dependent, however some lipid transfer might occur at the plasma membrane. The virus undergoes clathrin-dependent internalization long before endosomal fusion, thus minimizing the surface exposure of conserved viral epitopes during fusion and reducing the efficacy of inhibitors targeting these epitopes. Membranes fusion leads to delivery of the nucleocapsid into the cytoplasm. In terms of biological role, the envelope glycoprotein gp160 precursor down-modulates cell surface CD4 antigen by interacting with it in the endoplasmic reticulum and blocking its transport to the cell surface. Its function is as follows. The gp120-gp41 heterodimer seems to contribute to T-cell depletion during HIV-1 infection. The envelope glycoproteins expressed on the surface of infected cells induce apoptosis through an interaction with uninfected cells expressing the receptor (CD4) and the coreceptors CXCR4 or CCR5. This type of bystander killing may be obtained by at least three distinct mechanisms. First, the interaction between the 2 cells can induce cellular fusion followed by nuclear fusion within the syncytium. Syncytia are condemned to die from apoptosis. Second, the 2 interacting cells may not fuse entirely and simply exchange plasma membrane lipids, after a sort of hemifusion process, followed by rapid death. Third, it is possible that virus-infected cells, on the point of undergoing apoptosis, fuse with CD4-expressing cells, in which case apoptosis is rapidly transmitted from one cell to the other and thus occurs in a sort of contagious fashion. The gp120-gp41 heterodimer allows rapid transcytosis of the virus through CD4 negative cells such as simple epithelial monolayers of the intestinal, rectal and endocervical epithelial barriers. Both gp120 and gp41 specifically recognize glycosphingolipids galactosyl-ceramide (GalCer) or 3' sulfo-galactosyl-ceramide (GalS) present in the lipid rafts structures of epithelial cells. Binding to these alternative receptors allows the rapid transcytosis of the virus through the epithelial cells. This transcytotic vesicle-mediated transport of virions from the apical side to the basolateral side of the epithelial cells does not involve infection of the cells themselves. This chain is Envelope glycoprotein gp160 (env), found in Human immunodeficiency virus type 2 subtype A (isolate Ghana-1) (HIV-2).